The primary structure comprises 899 residues: Auxin response factor 25 (899 aa).

The segment at Met-1–Gly-20 is disordered. The TF-B3 DNA-binding region spans Phe-132–Asn-234. Residues Arg-546 to Ser-564 show a composition bias toward low complexity. Positions Arg-546 to Leu-586 are disordered. Residues Glu-575–Leu-586 are compositionally biased toward polar residues. In terms of domain architecture, PB1 spans Ala-766–Glu-850.

It belongs to the ARF family. Homodimers and heterodimers. As to expression, expressed in roots, culms, leaves and young panicles.

It is found in the nucleus. Its function is as follows. Auxin response factors (ARFs) are transcriptional factors that bind specifically to the DNA sequence 5'-TGTCTC-3' found in the auxin-responsive promoter elements (AuxREs). This chain is Auxin response factor 25 (ARF25), found in Oryza sativa subsp. japonica (Rice).